Consider the following 353-residue polypeptide: Photosystem II D2 protein (353 aa).

Threonine 2 is subject to N-acetylthreonine. Threonine 2 bears the Phosphothreonine mark. Residues 41 to 61 form a helical membrane-spanning segment; the sequence is CAYFALGGWFTGTTFVTSWYT. Chlorophyll a is bound at residue histidine 118. The chain crosses the membrane as a helical span at residues 125–141; that stretch reads GFMLRQFELARSVQLRP. Residues glutamine 130 and asparagine 143 each contribute to the pheophytin a site. The helical transmembrane segment at 153-166 threads the bilayer; it reads VFVSVFLIYPLGQS. Position 198 (histidine 198) interacts with chlorophyll a. Residues 208–228 traverse the membrane as a helical segment; it reads AALLCAIHGATVENTLFEDGD. The a plastoquinone site is built by histidine 215 and phenylalanine 262. Histidine 215 contributes to the Fe cation binding site. Position 269 (histidine 269) interacts with Fe cation. Residues 279–295 traverse the membrane as a helical segment; sequence GLWMSALGVVGLALNLR.

It belongs to the reaction center PufL/M/PsbA/D family. PSII is composed of 1 copy each of membrane proteins PsbA, PsbB, PsbC, PsbD, PsbE, PsbF, PsbH, PsbI, PsbJ, PsbK, PsbL, PsbM, PsbT, PsbX, PsbY, PsbZ, Psb30/Ycf12, at least 3 peripheral proteins of the oxygen-evolving complex and a large number of cofactors. It forms dimeric complexes. It depends on The D1/D2 heterodimer binds P680, chlorophylls that are the primary electron donor of PSII, and subsequent electron acceptors. It shares a non-heme iron and each subunit binds pheophytin, quinone, additional chlorophylls, carotenoids and lipids. There is also a Cl(-1) ion associated with D1 and D2, which is required for oxygen evolution. The PSII complex binds additional chlorophylls, carotenoids and specific lipids. as a cofactor.

It is found in the plastid. The protein localises to the chloroplast thylakoid membrane. It carries out the reaction 2 a plastoquinone + 4 hnu + 2 H2O = 2 a plastoquinol + O2. Functionally, photosystem II (PSII) is a light-driven water:plastoquinone oxidoreductase that uses light energy to abstract electrons from H(2)O, generating O(2) and a proton gradient subsequently used for ATP formation. It consists of a core antenna complex that captures photons, and an electron transfer chain that converts photonic excitation into a charge separation. The D1/D2 (PsbA/PsbD) reaction center heterodimer binds P680, the primary electron donor of PSII as well as several subsequent electron acceptors. D2 is needed for assembly of a stable PSII complex. This is Photosystem II D2 protein from Ranunculus macranthus (Large buttercup).